The primary structure comprises 212 residues: Ribonuclease HII (212 aa).

The 191-residue stretch at 22 to 212 (ILIAGLDEAG…APLKGMIDGL (191 aa)) folds into the RNase H type-2 domain. The a divalent metal cation site is built by aspartate 28, glutamate 29, and aspartate 123.

This sequence belongs to the RNase HII family. The cofactor is Mn(2+). Requires Mg(2+) as cofactor.

It is found in the cytoplasm. The enzyme catalyses Endonucleolytic cleavage to 5'-phosphomonoester.. Its function is as follows. Endonuclease that specifically degrades the RNA of RNA-DNA hybrids. This is Ribonuclease HII from Dehalococcoides mccartyi (strain ATCC BAA-2100 / JCM 16839 / KCTC 5957 / BAV1).